We begin with the raw amino-acid sequence, 83 residues long: Mu-theraphotoxin-Hhn2b 1 (83 aa).

An N-terminal signal peptide occupies residues 1 to 21 (MKASMFLALAGLVLLFVVCYA). The propeptide occupies 22 to 48 (SESEEKEFPRELISKIFAVDDFKGEER). Intrachain disulfides connect cysteine 50–cysteine 65, cysteine 57–cysteine 70, and cysteine 64–cysteine 77. Residue leucine 81 is modified to Leucine amide.

This sequence belongs to the neurotoxin 10 (Hwtx-1) family. 14 (Hntx-1) subfamily. Monomer. Expressed by the venom gland.

It localises to the secreted. Its function is as follows. Weakly blocks the rat SCN2A/SCN1B (Nav1.2/beta-1) sodium channel (IC(50)=68 uM) and the insect sodium channel para/tipE (IC(50)=4.3 uM), without altering the activation or inactivation kinetics (depressant toxin). In Cyriopagopus hainanus (Chinese bird spider), this protein is Mu-theraphotoxin-Hhn2b 1.